The chain runs to 135 residues: Beta/delta-urticatoxin-Ui2a (135 aa).

The signal sequence occupies residues 1-18 (MGAIVLVAIMALVASSSA). The propeptide occupies 19–72 (FSDDEQNMMNAEGEKGIRSYSAADDVSDMIESLFVNSGNRNLVLMMLSGRPQPN). 6 cysteine pairs are disulfide-bonded: Cys-75–Cys-92, Cys-82–Cys-97, Cys-91–Cys-105, Cys-107–Cys-121, Cys-114–Cys-126, and Cys-120–Cys-134.

This sequence belongs to the urticatoxin-2 family. Expressed in trichomes, that are stiff epidermal hairs located on the surface of petioles and leaves.

The protein localises to the secreted. Functionally, plant defense neurotoxin that causes pain and systemic symptoms in mammals via modulation of voltage-gated sodium channels (Nav). Potent modulator of human Nav1.5/SCN5A (EC(50)=55 nM), Nav1.6/SCN8A (EC(50)=0.86 nM), and Nav1.7/SCN9A (EC(50)=208 nM), where it shifts the activation threshold to more negative potentials and delays fast inactivation. Also shifts the voltage-dependence of steady-state fast inactivation of Nav1.6/SCN8A, but not that of Nav1.5/SCN5A or Nav1.7/SCN9A. On Nav1.7/SCN9A, principally acts by binding to extracellular loops of domain IV (Nav site 3). In vivo, intraplantar injection into mice causes numerous dose-dependent, immediate, and long-lasting spontaneous pain behaviors, while no swelling is observed in the injected paw. At the highest doses tested, systemic symptoms including hypokinesia and hypersalivation are observed. This Urtica incisa (Scrub nettle) protein is Beta/delta-urticatoxin-Ui2a.